The chain runs to 342 residues: N-acetyl-gamma-glutamyl-phosphate reductase (342 aa).

C149 is a catalytic residue.

Belongs to the NAGSA dehydrogenase family. Type 1 subfamily.

It is found in the cytoplasm. The enzyme catalyses N-acetyl-L-glutamate 5-semialdehyde + phosphate + NADP(+) = N-acetyl-L-glutamyl 5-phosphate + NADPH + H(+). It participates in amino-acid biosynthesis; L-arginine biosynthesis; N(2)-acetyl-L-ornithine from L-glutamate: step 3/4. In terms of biological role, catalyzes the NADPH-dependent reduction of N-acetyl-5-glutamyl phosphate to yield N-acetyl-L-glutamate 5-semialdehyde. The chain is N-acetyl-gamma-glutamyl-phosphate reductase from Nitrosomonas europaea (strain ATCC 19718 / CIP 103999 / KCTC 2705 / NBRC 14298).